Reading from the N-terminus, the 964-residue chain is Integrator complex subunit 7 (964 aa).

The segment covering 937-958 has biased composition (low complexity); sequence QQLRHQLQQQQQNVPQPAAQRN. The segment at 937–964 is disordered; the sequence is QQLRHQLQQQQQNVPQPAAQRNISTRFQ.

This sequence belongs to the Integrator subunit 7 family. Component of the Integrator complex, composed of core subunits INTS1, INTS2, INTS3, INTS4, INTS5, INTS6, INTS7, INTS8, INTS9/RC74, INTS10, INTS11/CPSF3L, INTS12, INTS13, INTS14 and INTS15. The core complex associates with protein phosphatase 2A subunits PPP2CA and PPP2R1A, to form the Integrator-PP2A (INTAC) complex.

Its subcellular location is the nucleus. It is found in the chromosome. The protein localises to the cytoplasm. Its function is as follows. Component of the integrator complex, a multiprotein complex that terminates RNA polymerase II (Pol II) transcription in the promoter-proximal region of genes. The integrator complex provides a quality checkpoint during transcription elongation by driving premature transcription termination of transcripts that are unfavorably configured for transcriptional elongation: the complex terminates transcription by (1) catalyzing dephosphorylation of the C-terminal domain (CTD) of Pol II subunit POLR2A/RPB1 and SUPT5H/SPT5, (2) degrading the exiting nascent RNA transcript via endonuclease activity and (3) promoting the release of Pol II from bound DNA. The integrator complex is also involved in terminating the synthesis of non-coding Pol II transcripts, such as enhancer RNAs (eRNAs), small nuclear RNAs (snRNAs), telomerase RNAs and long non-coding RNAs (lncRNAs). Essential during embryogenesis for eye development. The protein is Integrator complex subunit 7 (ints7) of Danio rerio (Zebrafish).